Reading from the N-terminus, the 246-residue chain is Aspartate/glutamate leucyltransferase (246 aa).

It belongs to the R-transferase family. Bpt subfamily.

The protein resides in the cytoplasm. It catalyses the reaction N-terminal L-glutamyl-[protein] + L-leucyl-tRNA(Leu) = N-terminal L-leucyl-L-glutamyl-[protein] + tRNA(Leu) + H(+). It carries out the reaction N-terminal L-aspartyl-[protein] + L-leucyl-tRNA(Leu) = N-terminal L-leucyl-L-aspartyl-[protein] + tRNA(Leu) + H(+). Functionally, functions in the N-end rule pathway of protein degradation where it conjugates Leu from its aminoacyl-tRNA to the N-termini of proteins containing an N-terminal aspartate or glutamate. The chain is Aspartate/glutamate leucyltransferase from Rhodospirillum rubrum (strain ATCC 11170 / ATH 1.1.1 / DSM 467 / LMG 4362 / NCIMB 8255 / S1).